Reading from the N-terminus, the 152-residue chain is Large ribosomal subunit protein uL13 (152 aa).

A disordered region spans residues Glu-129 to Ser-152.

It belongs to the universal ribosomal protein uL13 family. In terms of assembly, part of the 50S ribosomal subunit.

This protein is one of the early assembly proteins of the 50S ribosomal subunit, although it is not seen to bind rRNA by itself. It is important during the early stages of 50S assembly. The sequence is that of Large ribosomal subunit protein uL13 from Ruegeria sp. (strain TM1040) (Silicibacter sp.).